A 313-amino-acid chain; its full sequence is Solute carrier family 35 member E3 (313 aa).

Helical transmembrane passes span 17–37, 40–60, 71–91, 126–146, 154–174, 187–206, 225–245, 252–272, and 275–295; these read GLLF…WIYV, GFPN…GLYI, SLPL…VVFT, FSVR…LNSY, LGMV…VWVG, LLYY…VPFF, LMVL…YWII, TYNM…YILF, and PLSV…LTYT.

It belongs to the TPT transporter family. SLC35E subfamily.

It is found in the membrane. In terms of biological role, putative transporter. This Mus musculus (Mouse) protein is Solute carrier family 35 member E3 (Slc35e3).